The chain runs to 424 residues: WD-40 repeat-containing protein MSI3 (424 aa).

An N-acetylmethionine modification is found at M1. WD repeat units follow at residues 167-207 (GHEQ…TDKV), 216-256 (GHQS…MQHQ), 259-299 (VHER…APLH), 303-343 (KHEG…DEQL), and 362-402 (GHKA…YRED). Residues 233–249 (IFGSAGDDCQLVIWDLR) carry the DWD box motif. The segment at 394–424 (MAESIYREDDEDEDDDDEGNQNAQHSNENQK) is disordered. Positions 401 to 412 (EDDEDEDDDDEG) are enriched in acidic residues. Polar residues predominate over residues 413–424 (NQNAQHSNENQK).

This sequence belongs to the WD repeat RBAP46/RBAP48/MSI1 family.

It is found in the nucleus. Core histone-binding subunit that may target chromatin assembly factors, chromatin remodeling factors and histone deacetylases to their histone substrates in a manner that is regulated by nucleosomal DNA. The chain is WD-40 repeat-containing protein MSI3 (MSI3) from Arabidopsis thaliana (Mouse-ear cress).